An 88-amino-acid polypeptide reads, in one-letter code: Small ribosomal subunit protein bS20 (88 aa).

The span at 1–10 (MANHKSSLKR) shows a compositional bias: basic residues. Positions 1–24 (MANHKSSLKRAKQDIVRNTRNKSR) are disordered.

It belongs to the bacterial ribosomal protein bS20 family.

Its function is as follows. Binds directly to 16S ribosomal RNA. The sequence is that of Small ribosomal subunit protein bS20 from Desulfosudis oleivorans (strain DSM 6200 / JCM 39069 / Hxd3) (Desulfococcus oleovorans).